Here is a 338-residue protein sequence, read N- to C-terminus: Phenylalanine--tRNA ligase alpha subunit (338 aa).

Glu252 is a binding site for Mg(2+).

The protein belongs to the class-II aminoacyl-tRNA synthetase family. Phe-tRNA synthetase alpha subunit type 1 subfamily. Tetramer of two alpha and two beta subunits. It depends on Mg(2+) as a cofactor.

Its subcellular location is the cytoplasm. It catalyses the reaction tRNA(Phe) + L-phenylalanine + ATP = L-phenylalanyl-tRNA(Phe) + AMP + diphosphate + H(+). This is Phenylalanine--tRNA ligase alpha subunit from Pseudomonas fluorescens (strain ATCC BAA-477 / NRRL B-23932 / Pf-5).